A 258-amino-acid chain; its full sequence is Imidazole glycerol phosphate synthase subunit HisF (258 aa).

Active-site residues include D11 and D130.

Belongs to the HisA/HisF family. In terms of assembly, heterodimer of HisH and HisF.

The protein localises to the cytoplasm. The enzyme catalyses 5-[(5-phospho-1-deoxy-D-ribulos-1-ylimino)methylamino]-1-(5-phospho-beta-D-ribosyl)imidazole-4-carboxamide + L-glutamine = D-erythro-1-(imidazol-4-yl)glycerol 3-phosphate + 5-amino-1-(5-phospho-beta-D-ribosyl)imidazole-4-carboxamide + L-glutamate + H(+). Its pathway is amino-acid biosynthesis; L-histidine biosynthesis; L-histidine from 5-phospho-alpha-D-ribose 1-diphosphate: step 5/9. In terms of biological role, IGPS catalyzes the conversion of PRFAR and glutamine to IGP, AICAR and glutamate. The HisF subunit catalyzes the cyclization activity that produces IGP and AICAR from PRFAR using the ammonia provided by the HisH subunit. The polypeptide is Imidazole glycerol phosphate synthase subunit HisF (Shigella boydii serotype 18 (strain CDC 3083-94 / BS512)).